We begin with the raw amino-acid sequence, 124 residues long: Putative membrane protein insertion efficiency factor (124 aa).

Positions M1 to W24 are disordered. Residues R12 to W24 show a composition bias toward low complexity.

Belongs to the UPF0161 family.

Its subcellular location is the cell inner membrane. Its function is as follows. Could be involved in insertion of integral membrane proteins into the membrane. This Mesorhizobium japonicum (strain LMG 29417 / CECT 9101 / MAFF 303099) (Mesorhizobium loti (strain MAFF 303099)) protein is Putative membrane protein insertion efficiency factor.